The sequence spans 546 residues: Chaperonin GroEL (546 aa).

Residues 30–33 (TLGP), Lys51, 87–91 (DGTTT), Gly415, 479–481 (NAA), and Asp495 contribute to the ATP site. Positions 526–546 (KEDAPMPGGMPGGMGGMGMDM) are disordered. Residues 534-546 (GMPGGMGGMGMDM) are compositionally biased toward gly residues.

Belongs to the chaperonin (HSP60) family. As to quaternary structure, forms a cylinder of 14 subunits composed of two heptameric rings stacked back-to-back. Interacts with the co-chaperonin GroES.

Its subcellular location is the cytoplasm. The catalysed reaction is ATP + H2O + a folded polypeptide = ADP + phosphate + an unfolded polypeptide.. Together with its co-chaperonin GroES, plays an essential role in assisting protein folding. The GroEL-GroES system forms a nano-cage that allows encapsulation of the non-native substrate proteins and provides a physical environment optimized to promote and accelerate protein folding. The chain is Chaperonin GroEL from Burkholderia thailandensis.